The primary structure comprises 79 residues: Short neurotoxin 6 (79 aa).

The N-terminal stretch at 1–21 (MKTLLLTLVMVTIMCLDLGYT) is a signal peptide. Intrachain disulfides connect Cys24–Cys41, Cys34–Cys59, Cys63–Cys71, and Cys72–Cys77.

This sequence belongs to the three-finger toxin family. Short-chain subfamily. Type III alpha-neurotoxin sub-subfamily. In terms of tissue distribution, expressed by the venom gland.

The protein localises to the secreted. Its function is as follows. Binds with high affinity to muscle nicotinic acetylcholine receptor (nAChR) and hinders acetylcholine binding to the receptor, thereby impairing neuromuscular transmission. Competes with the binding of alpha-bungarotoxin on muscle AChR (from Torpedo) with an IC(50) of 0.18 uM. Causes muscle paralysis, spasms and increased respiration. The polypeptide is Short neurotoxin 6 (Pseudonaja textilis (Eastern brown snake)).